We begin with the raw amino-acid sequence, 80 residues long: uncharacterized protein (80 aa).

This is an uncharacterized protein from Escherichia coli (Bacteriophage T4).